The following is a 334-amino-acid chain: Leucine-rich repeat-containing protein 26 (334 aa).

The first 30 residues, 1–30 (MRGSFFSRLPPQLSLLLLLLLLLSWRRVWT), serve as a signal peptide directing secretion. The Extracellular segment spans residues 31–265 (QEHIGTDPSK…QCTQSLAARD (235 aa)). The LRRNT domain maps to 38-75 (PSKSPVAPVCPEACSCSPGGKANCSALALPAVPAGLSW). 2 cysteine pairs are disulfide-bonded: C47–C53 and C51–C61. LRR repeat units follow at residues 76-97 (QVRSLLLDRNRVSTLPPGAFAD), 100-121 (ALLYLVLRENRLRSVHARAFWG), 124-145 (VLQRLDLSSNQLETLSPGTFTP), 148-169 (ALSFLSLAGNRLALLEPSILGP), and 172-194 (LLRVLSLQDNSLSALEAGLLNSL). The LRRCT domain maps to 205–259 (NPWACSCALRPLCTWLRKHPRPTSETETLLCVSPKLQTLNLLTDFPDNAFKQCTQ). 2 cysteine pairs are disulfide-bonded: C209/C235 and C211/C257. A helical membrane pass occupies residues 266-286 (LAVVYALGPASFLASLAICLA). The Cytoplasmic segment spans residues 287–334 (LGSVLTACGARRRRRRTTVRHLIRRQPDPEGPASLEDVGSPTTTAIQA). A disordered region spans residues 312–334 (QPDPEGPASLEDVGSPTTTAIQA).

As to quaternary structure, interacts with KCNMA1.

The protein resides in the cell membrane. It is found in the cytoplasm. It localises to the cytoskeleton. Functionally, auxiliary protein of the large-conductance, voltage and calcium-activated potassium channel (BK alpha). Required for the conversion of BK alpha channels from a high-voltage to a low-voltage activated channel type in non-excitable cells. These are characterized by negative membrane voltages and constant low levels of calcium. This chain is Leucine-rich repeat-containing protein 26 (Lrrc26), found in Rattus norvegicus (Rat).